Consider the following 209-residue polypeptide: Protein ASG7 (209 aa).

Over 1 to 49 (MTTLASSIEHKTKHLAAPFENDENTWMKKYCCQCKSCKMSVPVQPWLPR) the chain is Lumenal. Residues 50–70 (FFVFGILCPVFWLVNLLAWWF) form a helical membrane-spanning segment. Topologically, residues 71–184 (LQYWQPHELE…LLRKTFRNWN (114 aa)) are cytoplasmic. Phosphoserine is present on residues Ser-121, Ser-123, and Ser-125. Thr-153 bears the Phosphothreonine mark. A helical membrane pass occupies residues 185–205 (LRSLLGLLIDSILIIFVVLLC). Topologically, residues 206-209 (KKSR) are lumenal.

The protein resides in the endomembrane system. In terms of biological role, required for receptor inhibition of inappropriately expressed a-factor receptor (STE3) in MAT a cells. Inhibits signaling by relocalizing the G protein beta-gamma (STE4-STE18) subunit to intracellular membranes. May also be a mechanism for the down-regulation of the mating pheromone response after the zygotic fusion event, promoting the transition of the new diploid cell to vegetative growth. In Saccharomyces cerevisiae (strain YJM789) (Baker's yeast), this protein is Protein ASG7 (ASG7).